A 443-amino-acid polypeptide reads, in one-letter code: Dihydroorotate dehydrogenase (quinone), mitochondrial (443 aa).

The transit peptide at 1–21 (MYQRSLFRGVAQGLKRSSVRF) directs the protein to the mitochondrion. The helical transmembrane segment at 38-54 (WKLLSVIGSFTAGVAIY) threads the bilayer. Residues 122-126 (AGFDK) and S146 contribute to the FMN site. A substrate-binding site is contributed by K126. Position 168 is a phosphoserine (S168). 171–175 (NRYGF) serves as a coordination point for substrate. Residues N234 and N264 each coordinate FMN. A substrate-binding site is contributed by 264 to 269 (NVSSPN). The active-site Nucleophile is the S267. K306 provides a ligand contact to FMN. 335 to 336 (NT) contributes to the substrate binding site. Residues G358, G387, and 408–409 (YT) contribute to the FMN site.

It belongs to the dihydroorotate dehydrogenase family. Type 2 subfamily. The cofactor is FMN.

It is found in the mitochondrion inner membrane. The catalysed reaction is (S)-dihydroorotate + a quinone = orotate + a quinol. Its pathway is pyrimidine metabolism; UMP biosynthesis via de novo pathway; orotate from (S)-dihydroorotate (quinone route): step 1/1. Functionally, in the de novo pyrimidine biosynthesis pathway, catalyzes the stereospecific oxidation of (S)-dihydroorotate to orotate with reduction of flavin and the transfer of electrons to ubiquinone, which is part of the respiratory chain. Does not use fumarate and NAD as electron acceptors. The chain is Dihydroorotate dehydrogenase (quinone), mitochondrial (ura3) from Schizosaccharomyces pombe (strain 972 / ATCC 24843) (Fission yeast).